Reading from the N-terminus, the 120-residue chain is Protein CcdB (120 aa).

One can recognise a Response regulatory domain in the interval 3 to 118 (RVLVVDDAKF…KVLEAVSRVM (116 aa)). The residue at position 53 (aspartate 53) is a 4-aspartylphosphate.

This chain is Protein CcdB (ccdB), found in Bacillus subtilis (strain 168).